Here is a 204-residue protein sequence, read N- to C-terminus: NAD(P)H-quinone oxidoreductase subunit M, chloroplastic (204 aa).

The N-terminal 27 residues, 1–27, are a transit peptide targeting the chloroplast; that stretch reads MASTSMSLTRACKVHAVLACSIPSVSS.

This sequence belongs to the NDH complex subunit M family. Part of the chloroplast NDH complex, composed of a mixture of chloroplast and nucleus encoded subunits. Component of the NDH subcomplex A, at least composed of ndhH, ndhI, ndhJ, ndhK, ndhL, ndhM, ndhN and ndhO.

It localises to the plastid. It is found in the chloroplast thylakoid membrane. It catalyses the reaction a plastoquinone + NADH + (n+1) H(+)(in) = a plastoquinol + NAD(+) + n H(+)(out). The enzyme catalyses a plastoquinone + NADPH + (n+1) H(+)(in) = a plastoquinol + NADP(+) + n H(+)(out). NDH shuttles electrons from NAD(P)H:plastoquinone, via FMN and iron-sulfur (Fe-S) centers, to quinones in the photosynthetic chain and possibly in a chloroplast respiratory chain. The immediate electron acceptor for the enzyme in this species is believed to be plastoquinone. Couples the redox reaction to proton translocation, and thus conserves the redox energy in a proton gradient. This is NAD(P)H-quinone oxidoreductase subunit M, chloroplastic from Physcomitrium patens (Spreading-leaved earth moss).